The sequence spans 398 residues: Serine/threonine-protein kinase UL13 (398 aa).

The span at 1–10 (MAAGGGGGGV) shows a compositional bias: gly residues. The segment at 1–44 (MAAGGGGGGVSRAALARPPIHRGTSAPGGAIAAAGGDGDGDEAS) is disordered. One can recognise a Protein kinase domain in the interval 80–398 (TGDPVAVGAG…GGARFAELAA (319 aa)). Residues 86–94 (VGAGSYGSV) and lysine 103 each bind ATP. The active-site Proton acceptor is the aspartate 194.

It belongs to the protein kinase superfamily. Ser/Thr protein kinase family. Post-translationally, autophosphorylated.

It localises to the virion tegument. It is found in the host nucleus. The protein localises to the host cytoplasm. Its subcellular location is the host endoplasmic reticulum. It carries out the reaction L-seryl-[protein] + ATP = O-phospho-L-seryl-[protein] + ADP + H(+). The enzyme catalyses L-threonyl-[protein] + ATP = O-phospho-L-threonyl-[protein] + ADP + H(+). In terms of biological role, multifunctional serine/threonine kinase that plays a role in several processes including egress of virus particles from the nucleus, modulation of the actin cytoskeleton and regulation of viral and cellular gene expression. Regulates the nuclear localization of viral envelopment factors UL34 and UL31, by phosphorylating the US3 kinase, indicating a role in nuclear egress. Disrupts host nuclear lamins, including LMNA and LMNB1. Phosphorylates the viral Fc receptor composed of glycoproteins E (gE) and I (gI). Phosphorylation of glycoprotein E (gE) by UL13 alters its subcellular localization, from the host early endosome to the plasma membrane. Participates in the transcriptional regulation of cellular and viral mRNAs mainly by phosphorylating the viral transcriptional regulator ICP22. Functions as an antagonist of the host RLR-mediated antiviral responses via suppression of the transcription of cytosolic receptors RIGI and IFIH1. Facilitates immune evasion also by recruiting host RNF5 to initiate the 'Lys-27'-/'Lys-29'-linked polyubiquitination of STING1; leading to its degradation. Blocks host IFN-beta transactivation mediated by the cGAS-STING pathway by phosphorylating host IRF3. In turn, IRF3 binding to the IRF3-responsive promoters and downstream interferon stimulated genes/ISG expression are greatly impaired. Induces the activation of the host DNA damage response via H2AX phosphorylation to improve efficient viral replication and progeny production. The polypeptide is Serine/threonine-protein kinase UL13 (UL13) (Suid herpesvirus 1 (strain NIA-3) (SuHV-1)).